The primary structure comprises 348 residues: Chemokine C-C motif receptor-like 2 (348 aa).

Over 1–43 (MANYTPAPEDDYDVFIEDDLSDDEIEPCTPYDPKILSAQLVPY) the chain is Extracellular. Residues 44–64 (LYTTVFMVGLLDNILVVFILV) form a helical membrane-spanning segment. At 65–76 (KYKGLRQAENMS) the chain is on the cytoplasmic side. A helical membrane pass occupies residues 77–97 (FLNLALSNLGFLLTLPFWAYA). At 98 to 110 (ASHGEGFDDPLCK) the chain is on the extracellular side. A disulfide bridge links Cys-109 with Cys-187. The helical transmembrane segment at 111–131 (ILLLLYSIGLYSEAFFNVLLT) threads the bilayer. Over 132–150 (VQRYKEFFHVRRRFSACRT) the chain is Cytoplasmic. A helical transmembrane segment spans residues 151-171 (VAGSIFISVLVWVTATLVTLP). The Extracellular portion of the chain corresponds to 172–204 (ELVSYKPQMQSQKYKCFFTGLHFLPADETFWKH). Residues 205 to 225 (FLTLKMNILGFLLPLFAFVYC) form a helical membrane-spanning segment. Residues 226–244 (YVRMRKTLQFRERNYGLFK) lie on the Cytoplasmic side of the membrane. Residues 245 to 265 (LVFTIMAVFLLMWGPYNIVLF) traverse the membrane as a helical segment. The Extracellular segment spans residues 266 to 292 (LSAFNEHFSLHGCGSSYNLNKSVQITR). Asn-285 carries an N-linked (GlcNAc...) asparagine glycan. Residues 293 to 313 (IIAATHCCVNPLLYVFLDKAF) form a helical membrane-spanning segment. Residues 314–348 (RKHLCHLFYLCSDTAPQPTEEPAQGASGEEYHLSS) are Cytoplasmic-facing.

Belongs to the G-protein coupled receptor 1 family.

The protein resides in the cell membrane. Functionally, receptor for CCL19 and chemerin/RARRES2. Does not appear to be a signaling receptor, but may have a role in modulating chemokine-triggered immune responses by capturing and internalizing CCL19 or by presenting RARRES2 ligand to CMKLR1, a functional signaling receptor. Plays a critical role for the development of Th2 responses. The polypeptide is Chemokine C-C motif receptor-like 2 (CCRL2) (Bos taurus (Bovine)).